A 358-amino-acid polypeptide reads, in one-letter code: Peptide chain release factor 1 (358 aa).

At Gln-235 the chain carries N5-methylglutamine.

Belongs to the prokaryotic/mitochondrial release factor family. In terms of processing, methylated by PrmC. Methylation increases the termination efficiency of RF1.

It is found in the cytoplasm. Functionally, peptide chain release factor 1 directs the termination of translation in response to the peptide chain termination codons UAG and UAA. This Neisseria meningitidis serogroup C (strain 053442) protein is Peptide chain release factor 1.